The sequence spans 641 residues: E3 ubiquitin-protein ligase TRIM47 (641 aa).

The RING-type zinc finger occupies 9 to 58; the sequence is CPICLEPLREPVTLPCGHNFCLACLGALWPHRSAGGTGGSGGPARCPLCQ. Threonine 72 carries the phosphothreonine modification. Residues 81-123 are disordered; the sequence is QGSVPGPMSAPASGSTRGATPEPSAPSAPPPAPEPSAPCAPEQ. Residues 103–118 show a composition bias toward pro residues; it reads PSAPSAPPPAPEPSAP. The B box-type zinc finger occupies 181 to 221; that stretch reads LEESLCPRHLRPLERYCRVERVCLCEACATQDHRGHELVPL. 4 residues coordinate Zn(2+): cysteine 186, histidine 189, cysteine 208, and histidine 213. A coiled-coil region spans residues 305 to 325; sequence QGDLRRQEEQRSRLSKARHNL. At serine 393 the chain carries Phosphoserine. Positions 396–416 are disordered; it reads DGLQKLGSEDVESQDPDSTSL. A B30.2/SPRY domain is found at 413 to 634; sequence STSLLESEAP…LQIGPLKKSC (222 aa). A Phosphoserine modification is found at serine 464. Arginine 585 is modified (omega-N-methylarginine). Phosphoserine is present on serine 591.

The protein belongs to the TRIM/RBCC family. As to expression, expressed in hepatocytes, expression is increased in fatty livers.

It localises to the cytoplasm. Its subcellular location is the nucleus. The catalysed reaction is S-ubiquitinyl-[E2 ubiquitin-conjugating enzyme]-L-cysteine + [acceptor protein]-L-lysine = [E2 ubiquitin-conjugating enzyme]-L-cysteine + N(6)-ubiquitinyl-[acceptor protein]-L-lysine.. It functions in the pathway protein modification; protein ubiquitination. E3 ubiquitin-protein ligase that mediates the ubiquitination and proteasomal degradation of CYLD. This is E3 ubiquitin-protein ligase TRIM47 from Mus musculus (Mouse).